A 396-amino-acid chain; its full sequence is S-adenosylmethionine synthase (396 aa).

Residue histidine 14 participates in ATP binding. Aspartate 16 is a Mg(2+) binding site. Glutamate 42 serves as a coordination point for K(+). 2 residues coordinate L-methionine: glutamate 55 and glutamine 98. The tract at residues glutamine 98–lysine 108 is flexible loop. Residues aspartate 174 to lysine 176, arginine 241 to phenylalanine 242, aspartate 250, arginine 256 to lysine 257, alanine 273, and lysine 277 each bind ATP. Aspartate 250 is an L-methionine binding site. Lysine 281 is a binding site for L-methionine.

This sequence belongs to the AdoMet synthase family. In terms of assembly, homotetramer; dimer of dimers. Mg(2+) serves as cofactor. It depends on K(+) as a cofactor.

The protein localises to the cytoplasm. The enzyme catalyses L-methionine + ATP + H2O = S-adenosyl-L-methionine + phosphate + diphosphate. It functions in the pathway amino-acid biosynthesis; S-adenosyl-L-methionine biosynthesis; S-adenosyl-L-methionine from L-methionine: step 1/1. Functionally, catalyzes the formation of S-adenosylmethionine (AdoMet) from methionine and ATP. The overall synthetic reaction is composed of two sequential steps, AdoMet formation and the subsequent tripolyphosphate hydrolysis which occurs prior to release of AdoMet from the enzyme. The chain is S-adenosylmethionine synthase from Pseudothermotoga lettingae (strain ATCC BAA-301 / DSM 14385 / NBRC 107922 / TMO) (Thermotoga lettingae).